The following is a 418-amino-acid chain: Serine hydroxymethyltransferase (418 aa).

(6S)-5,6,7,8-tetrahydrofolate is bound by residues L121 and 125–127 (GHL). At K230 the chain carries N6-(pyridoxal phosphate)lysine. 355–357 (SPF) contacts (6S)-5,6,7,8-tetrahydrofolate.

It belongs to the SHMT family. In terms of assembly, homodimer. Pyridoxal 5'-phosphate serves as cofactor.

It is found in the cytoplasm. The catalysed reaction is (6R)-5,10-methylene-5,6,7,8-tetrahydrofolate + glycine + H2O = (6S)-5,6,7,8-tetrahydrofolate + L-serine. It participates in one-carbon metabolism; tetrahydrofolate interconversion. Its pathway is amino-acid biosynthesis; glycine biosynthesis; glycine from L-serine: step 1/1. Its function is as follows. Catalyzes the reversible interconversion of serine and glycine with tetrahydrofolate (THF) serving as the one-carbon carrier. This reaction serves as the major source of one-carbon groups required for the biosynthesis of purines, thymidylate, methionine, and other important biomolecules. Also exhibits THF-independent aldolase activity toward beta-hydroxyamino acids, producing glycine and aldehydes, via a retro-aldol mechanism. In Streptococcus pneumoniae (strain P1031), this protein is Serine hydroxymethyltransferase.